The sequence spans 155 residues: Endoribonuclease YbeY (155 aa).

Zn(2+) contacts are provided by His120, His124, and His130.

The protein belongs to the endoribonuclease YbeY family. The cofactor is Zn(2+).

The protein localises to the cytoplasm. In terms of biological role, single strand-specific metallo-endoribonuclease involved in late-stage 70S ribosome quality control and in maturation of the 3' terminus of the 16S rRNA. The protein is Endoribonuclease YbeY of Staphylococcus aureus (strain Mu3 / ATCC 700698).